Reading from the N-terminus, the 465-residue chain is MPRLQCLTMATSLILLLQALSLVSSTILSRADRITRLPGQPRVGFQQYSGYVTIDEKKQRALFYYLAEAETKPISKPLVLWLNGGPGCSSLGVGAFSENGPFRPKGSILVRNQHSWNQEANMLYLETPVGVGFSYANESSSYEGVNDKITAKDNLVFLQKWFLKFPQYLNRSLFITGESYAGHYVPQLAQLMIQYNKKHNLFNLKGIAIGNPVMEFATDFNSRAEYFWSHGLISDPTYKLFTSSCNYSRFLSEYHRGSVSSMCTKVLSQVGIETSRFIDKYDVTLDVCIPSVLSQSKVVSPQPQQVGETVDVCLEDETVNYLNRRDVQKALHARLVGTRKWTVCSDVLDYEVLDVEVPTINIVGSLVKAGVPVFVYSGDQDSVIPLTGSRTLVKRLAEELGLRTTVPYRVWFAGQQVGGWTQVYGNTLAFATVRGAAHEVPFSQPARALVLFKAFLGGRPLPEEF.

The N-terminal stretch at 1-25 (MPRLQCLTMATSLILLLQALSLVSS) is a signal peptide. Disulfide bonds link Cys88-Cys344, Cys245-Cys263, and Cys288-Cys313. N-linked (GlcNAc...) asparagine glycans are attached at residues Asn137 and Asn170. Ser179 is an active-site residue. Asn246 carries N-linked (GlcNAc...) asparagine glycosylation. Catalysis depends on residues Asp381 and His438.

This sequence belongs to the peptidase S10 family. Ubiquitous.

Its subcellular location is the secreted. Probable carboxypeptidase. The chain is Serine carboxypeptidase-like 46 (SCPL46) from Arabidopsis thaliana (Mouse-ear cress).